Here is a 140-residue protein sequence, read N- to C-terminus: Organic hydroperoxide resistance protein-like (140 aa).

It belongs to the OsmC/Ohr family.

The chain is Organic hydroperoxide resistance protein-like from Mycoplasma pneumoniae (strain ATCC 29342 / M129 / Subtype 1) (Mycoplasmoides pneumoniae).